The chain runs to 243 residues: Derlin-1.2 (243 aa).

Residues 1-20 lie on the Cytoplasmic side of the membrane; it reads MSSPAEYYKSLPPISKAYGT. A helical membrane pass occupies residues 21 to 41; it reads LCFFTTVLVRLHILNPLFLYL. The Lumenal segment spans residues 42-54; the sequence is YYPRVFKKFEVWR. Residues 55–75 traverse the membrane as a helical segment; sequence IFTSFFFLGPFSINFGIRLLM. Residues 76 to 94 are Cytoplasmic-facing; that stretch reads IARYGVMLEKGAFDKRTAD. A helical membrane pass occupies residues 95–115; it reads FLWMMIFGAISLLVLSVIPQL. Over 116 to 155 the chain is Lumenal; it reads NTYVLGLPMVSMLVYVWSRENPNAQINIYGILQLKAFYLP. The chain crosses the membrane as a helical span at residues 156–176; the sequence is WVMLLLDVIFGSPLMPGLLGI. Topologically, residues 177 to 243 are cytoplasmic; sequence MVGHLYYYFA…FRGRSYRLNQ (67 aa).

The protein belongs to the derlin family. As to expression, expressed in roots and endosperm.

The protein resides in the endoplasmic reticulum membrane. Its function is as follows. May be involved in the degradation process of specific misfolded endoplasmic reticulum (ER) luminal proteins. The polypeptide is Derlin-1.2 (DER1.2) (Zea mays (Maize)).